A 75-amino-acid polypeptide reads, in one-letter code: uncharacterized protein (75 aa).

An N-terminal signal peptide occupies residues 1–25 (MSLFYRAVALGTLSALVWYSTSILA). A helical membrane pass occupies residues 55-75 (YRALLAFSLVICGTLLVTCVI).

The protein localises to the host endoplasmic reticulum membrane. Plays a role in the down-regulation of the host NKG2D ligand MICA by targeting ER-resident MICA to proteasomal degradation prior to the GPI-anchoring step. In turn, MICA reduction diminishes NK-cell killing of HCMV-infected cells. This is an uncharacterized protein from Homo sapiens (Human).